We begin with the raw amino-acid sequence, 190 residues long: UPF0725 protein At2g20625 (190 aa).

The protein belongs to the UPF0725 (EMB2204) family.

The polypeptide is UPF0725 protein At2g20625 (Arabidopsis thaliana (Mouse-ear cress)).